Here is a 420-residue protein sequence, read N- to C-terminus: Gamma-glutamyl phosphate reductase (420 aa).

The protein belongs to the gamma-glutamyl phosphate reductase family.

The protein resides in the cytoplasm. It catalyses the reaction L-glutamate 5-semialdehyde + phosphate + NADP(+) = L-glutamyl 5-phosphate + NADPH + H(+). The protein operates within amino-acid biosynthesis; L-proline biosynthesis; L-glutamate 5-semialdehyde from L-glutamate: step 2/2. Its function is as follows. Catalyzes the NADPH-dependent reduction of L-glutamate 5-phosphate into L-glutamate 5-semialdehyde and phosphate. The product spontaneously undergoes cyclization to form 1-pyrroline-5-carboxylate. The protein is Gamma-glutamyl phosphate reductase of Cereibacter sphaeroides (strain ATCC 17023 / DSM 158 / JCM 6121 / CCUG 31486 / LMG 2827 / NBRC 12203 / NCIMB 8253 / ATH 2.4.1.) (Rhodobacter sphaeroides).